The sequence spans 353 residues: Photosystem II D2 protein (353 aa).

Position 2 is an N-acetylthreonine (threonine 2). At threonine 2 the chain carries Phosphothreonine. Residues 41 to 61 form a helical membrane-spanning segment; it reads CAYFALGGWFTGTTFVTSWYT. Histidine 118 contributes to the chlorophyll a binding site. The chain crosses the membrane as a helical span at residues 125-141; the sequence is GFMLRQFELARSVQLRP. The pheophytin a site is built by glutamine 130 and asparagine 143. A helical membrane pass occupies residues 153 to 166; the sequence is VFISVFFIYPLGQS. Histidine 198 contributes to the chlorophyll a binding site. The helical transmembrane segment at 208–228 threads the bilayer; sequence AALLCAIHGATVENTLFEDGD. A plastoquinone contacts are provided by histidine 215 and phenylalanine 262. A Fe cation-binding site is contributed by histidine 215. Fe cation is bound at residue histidine 269. A helical membrane pass occupies residues 279–295; that stretch reads GLWMSALGVVGLALNLR.

This sequence belongs to the reaction center PufL/M/PsbA/D family. PSII is composed of 1 copy each of membrane proteins PsbA, PsbB, PsbC, PsbD, PsbE, PsbF, PsbH, PsbI, PsbJ, PsbK, PsbL, PsbM, PsbT, PsbX, PsbY, PsbZ, Psb30/Ycf12, at least 3 peripheral proteins of the oxygen-evolving complex and a large number of cofactors. It forms dimeric complexes. The cofactor is The D1/D2 heterodimer binds P680, chlorophylls that are the primary electron donor of PSII, and subsequent electron acceptors. It shares a non-heme iron and each subunit binds pheophytin, quinone, additional chlorophylls, carotenoids and lipids. There is also a Cl(-1) ion associated with D1 and D2, which is required for oxygen evolution. The PSII complex binds additional chlorophylls, carotenoids and specific lipids..

Its subcellular location is the plastid membrane. The catalysed reaction is 2 a plastoquinone + 4 hnu + 2 H2O = 2 a plastoquinol + O2. Photosystem II (PSII) is a light-driven water:plastoquinone oxidoreductase that uses light energy to abstract electrons from H(2)O, generating O(2) and a proton gradient subsequently used for ATP formation. It consists of a core antenna complex that captures photons, and an electron transfer chain that converts photonic excitation into a charge separation. The D1/D2 (PsbA/PsbD) reaction center heterodimer binds P680, the primary electron donor of PSII as well as several subsequent electron acceptors. D2 is needed for assembly of a stable PSII complex. This Cuscuta reflexa (Southern Asian dodder) protein is Photosystem II D2 protein.